Reading from the N-terminus, the 297-residue chain is Methionyl-tRNA formyltransferase (297 aa).

The tract at residues 31 to 52 (QPPRAAGRGQKPRPSPVHRAAE) is disordered. 108-111 (SLLP) is a (6S)-5,6,7,8-tetrahydrofolate binding site.

This sequence belongs to the Fmt family.

It catalyses the reaction L-methionyl-tRNA(fMet) + (6R)-10-formyltetrahydrofolate = N-formyl-L-methionyl-tRNA(fMet) + (6S)-5,6,7,8-tetrahydrofolate + H(+). Its function is as follows. Attaches a formyl group to the free amino group of methionyl-tRNA(fMet). The formyl group appears to play a dual role in the initiator identity of N-formylmethionyl-tRNA by promoting its recognition by IF2 and preventing the misappropriation of this tRNA by the elongation apparatus. The chain is Methionyl-tRNA formyltransferase from Paracoccus denitrificans (strain Pd 1222).